Here is a 514-residue protein sequence, read N- to C-terminus: Probable endopolygalacturonase D (514 aa).

The N-terminal stretch at 1 to 16 (MKRCALLTPLLPLALA) is a signal peptide. Residues 134–166 (IKSSSPGPSSSFAAAATTEAPTSTRASPYTPYT) are disordered. Residues 136-166 (SSSPGPSSSFAAAATTEAPTSTRASPYTPYT) are compositionally biased toward low complexity. A disulfide bond links Cys173 and Cys188. A glycan (N-linked (GlcNAc...) asparagine) is linked at Asn240. 7 PbH1 repeats span residues 280–302 (VYNSVVANLNIQNWPVHCFDIEN), 303–341 (TESLTLTGITLDNSAGDEPNDSSDGDPAAHNSDGFDIKS), 342–363 (STDLILKDSNVYNQDDCVAITS), 364–384 (GTNITVDNMYCSGGHGLSIGS), 393–414 (VDGVVFSNSQVVNSQNGCRIKT), 422–444 (VSNIKYENISLSGISKYGIVVQQ), and 456–500 (SNGV…SITG). The interval 312–335 (TLDNSAGDEPNDSSDGDPAAHNSD) is disordered. The N-linked (GlcNAc...) asparagine glycan is linked to Asn322. The active-site Proton donor is the Asp356. Residues Cys358 and Cys374 are joined by a disulfide bond. An N-linked (GlcNAc...) asparagine glycan is attached at Asn366. The active site involves His378. N-linked (GlcNAc...) asparagine glycosylation occurs at Asn429. A disulfide bridge links Cys483 with Cys488. A glycan (N-linked (GlcNAc...) asparagine) is linked at Asn490. Cys506 and Cys513 form a disulfide bridge.

It belongs to the glycosyl hydrolase 28 family.

It is found in the secreted. It carries out the reaction (1,4-alpha-D-galacturonosyl)n+m + H2O = (1,4-alpha-D-galacturonosyl)n + (1,4-alpha-D-galacturonosyl)m.. In terms of biological role, involved in maceration and soft-rotting of plant tissue. Hydrolyzes the 1,4-alpha glycosidic bonds of de-esterified pectate in the smooth region of the plant cell wall. This chain is Probable endopolygalacturonase D (pgaD), found in Emericella nidulans (strain FGSC A4 / ATCC 38163 / CBS 112.46 / NRRL 194 / M139) (Aspergillus nidulans).